The following is a 301-amino-acid chain: Zinc finger protein LEE1 (301 aa).

The disordered stretch occupies residues 1–25; sequence MDAFENMSVSNHPGGNARRNSQSAN. A compositionally biased stretch (polar residues) spans 7 to 25; sequence MSVSNHPGGNARRNSQSAN. Phosphoserine occurs at positions 21 and 30. 2 C3H1-type zinc fingers span residues 87-114 and 123-145; these read DYSH…HSPD and PCKY…HVLP. Ser-282 is subject to Phosphoserine.

The polypeptide is Zinc finger protein LEE1 (LEE1) (Saccharomyces cerevisiae (strain ATCC 204508 / S288c) (Baker's yeast)).